The primary structure comprises 1197 residues: SRC kinase signaling inhibitor 1 (1197 aa).

Residues 19 to 45 (AEGRARSPREEVGPRDPGGRGEPDPER) show a composition bias toward basic and acidic residues. The interval 19–80 (AEGRARSPRE…GGSGGRRFSN (62 aa)) is disordered. Phosphoserine is present on residues serine 47 and serine 52. Residues 65 to 75 (LGGGGSGGSGG) are compositionally biased toward gly residues. The residue at position 79 (serine 79) is a Phosphoserine. Threonine 86 carries the post-translational modification Phosphothreonine. Phosphoserine occurs at positions 87, 98, 178, 200, 204, 214, and 260. Tyrosine 276 carries the post-translational modification Phosphotyrosine. The tract at residues 319–415 (ASRESSPTRR…RRDVKPDEDL (97 aa)) is disordered. Residues 321–331 (RESSPTRRLNN) show a composition bias toward polar residues. A compositionally biased stretch (low complexity) spans 332–341 (LSPASHLASS). A phosphoserine mark is found at serine 333, serine 342, and serine 359. Positions 348–366 (PSGLPSGLPSGSPSRSRLS) are enriched in low complexity. Omega-N-methylarginine is present on residues arginine 364 and arginine 371. A phosphoserine mark is found at serine 378, serine 397, and serine 399. Residues 391-400 (PTSQGVSPSP) are compositionally biased toward polar residues. Residues 404–415 (LERRDVKPDEDL) show a composition bias toward basic and acidic residues. Tyrosine 431 carries the post-translational modification Phosphotyrosine. The tract at residues 501 to 676 (GFRLPPSSPQ…AVSSTPAGQP (176 aa)) is disordered. Residues 520-531 (GGPPPPHSPYSG) show a composition bias toward pro residues. Phosphoserine occurs at positions 527, 530, and 534. Omega-N-methylarginine is present on arginine 535. Phosphoserine occurs at positions 537, 547, 549, 551, and 556. Basic and acidic residues predominate over residues 595–607 (KDTETRERMEAME). 2 positions are modified to phosphoserine: serine 631 and serine 655. Phosphothreonine occurs at positions 658 and 671. The interaction with SNAP25 stretch occupies residues 681-731 (RLQMQMHLRGLQNSASDLRGQLQQLRKLQLQNQESVRALLKRTEAELSMRV). 2 coiled-coil regions span residues 688-708 (LRGL…LRKL) and 760-780 (EELI…IQRD). 2 positions are modified to phosphoserine: serine 878 and serine 900. Disordered regions lie at residues 891 to 949 (GLDF…ERDW) and 983 to 1065 (DCAS…VVTS). Threonine 918 bears the Phosphothreonine mark. At serine 1021 the chain carries Phosphoserine. A compositionally biased stretch (pro residues) spans 1036–1045 (KSPPPPPPRR). Phosphoserine occurs at positions 1077 and 1094. Residues 1141–1163 (SRLKAAQGPAGSPDKGKHGKQRT) form a disordered region.

It belongs to the SRCIN1 family. Interacts with BCAR1/p130Cas through its C-terminal domain and with CSK, CTTN and SRC. Also interacts with MAPRE3/EB3, SORBS3/vinexin and the N-terminal coiled-coil region of SNAP25. In terms of processing, tyrosine-phosphorylated in response to EGF and to cell adhesion to integrin ligands. As to expression, expressed exclusively in brain. Abundant in telencephalon and expressed moderately in cerebellum, hypothalamus, thalamus, superior and inferior colliculi, and olfactory bulb. No expression detected in medulla oblongata, spinal cord or pituitary gland. Enriched in the neuropil rather than soma in the thalamus, corpus striatum and cerebral cortex. Detected in astrocytes.

It is found in the cytoplasm. It localises to the cytoskeleton. The protein resides in the cell projection. The protein localises to the axon. Its subcellular location is the dendrite. It is found in the presynapse. It localises to the postsynapse. The protein resides in the postsynaptic density. In terms of biological role, acts as a negative regulator of SRC by activating CSK which inhibits SRC activity and downstream signaling, leading to impaired cell spreading and migration. Regulates dendritic spine morphology. Involved in calcium-dependent exocytosis. May play a role in neurotransmitter release or synapse maintenance. The polypeptide is SRC kinase signaling inhibitor 1 (Rattus norvegicus (Rat)).